We begin with the raw amino-acid sequence, 33 residues long: Photosystem II reaction center protein Psb30 (33 aa).

Residues leucine 5–alanine 25 form a helical membrane-spanning segment.

This sequence belongs to the Psb30/Ycf12 family. In terms of assembly, PSII is composed of 1 copy each of membrane proteins PsbA, PsbB, PsbC, PsbD, PsbE, PsbF, PsbH, PsbI, PsbJ, PsbK, PsbL, PsbM, PsbT, PsbX, PsbY, PsbZ, Psb30/Ycf12, peripheral proteins of the oxygen-evolving complex and a large number of cofactors. It forms dimeric complexes.

Its subcellular location is the plastid. The protein resides in the chloroplast thylakoid membrane. A core subunit of photosystem II (PSII), probably helps stabilize the reaction center. This chain is Photosystem II reaction center protein Psb30, found in Ostreococcus tauri.